Consider the following 107-residue polypeptide: Thioredoxin (107 aa).

The Thioredoxin domain occupies 2 to 107 (DSIVHVTDDS…QLTAFLDSNX (106 aa)). A disulfide bridge connects residues Cys-32 and Cys-35.

Belongs to the thioredoxin family.

In terms of biological role, participates in various redox reactions through the reversible oxidation of its active center dithiol to a disulfide and catalyzes dithiol-disulfide exchange reactions. This chain is Thioredoxin (trxA), found in Allochromatium vinosum (Chromatium vinosum).